Here is a 501-residue protein sequence, read N- to C-terminus: Growth/differentiation factor 5 (501 aa).

An N-terminal signal peptide occupies residues 1–27; sequence MRLPKLLTFLLWYLAWLDLEFICTVLG. The propeptide occupies 28–381; that stretch reads APDLGQRPQG…YLFSQRRKRR (354 aa). Residues 29 to 169 are disordered; the sequence is PDLGQRPQGT…EPFRPPPITP (141 aa). Residues 99–111 are compositionally biased toward pro residues; sequence PRPGGPEPKPGHP. Positions 148–162 are enriched in basic and acidic residues; it reads KAREPGPPREPKEPF. A glycan (N-linked (GlcNAc...) asparagine) is linked at asparagine 189. The tract at residues 246–265 is disordered; that stretch reads PSDTAKPAAPGGGRAAQLKL. 3 cysteine pairs are disulfide-bonded: cysteine 400/cysteine 466, cysteine 429/cysteine 498, and cysteine 433/cysteine 500.

The protein belongs to the TGF-beta family. In terms of assembly, homodimer; disulfide-linked. Interacts with serine proteases, HTRA1 and HTRA3. Following LPS binding, may form a complex with CXCR4, HSP90AA1 and HSPA8. Interacts with high affinity with NOG; inhibits chondrogenesis. Interacts with high affinity with BMPR1B and lower affinity with BMPR1A; positively regulates chondrocyte differentiation and induces SMAD dependent signaling. Interacts with FBN1 (via N-terminal domain) and FBN2. Interacts with TGFBR3. Predominantly expressed in long bones during embryonic development. Expressed in monocytes (at protein level).

It localises to the secreted. The protein resides in the cell membrane. Growth factor involved in bone and cartilage formation. During cartilage development regulates differentiation of chondrogenic tissue through two pathways. Firstly, positively regulates differentiation of chondrogenic tissue through its binding of high affinity with BMPR1B and of less affinity with BMPR1A, leading to induction of SMAD1-SMAD5-SMAD8 complex phosphorylation and then SMAD protein signaling transduction. Secondly, negatively regulates chondrogenic differentiation through its interaction with NOG. Required to prevent excessive muscle loss upon denervation. This function requires SMAD4 and is mediated by phosphorylated SMAD1/5/8. Binds bacterial lipopolysaccharide (LPS) and mediates LPS-induced inflammatory response, including TNF secretion by monocytes. This Homo sapiens (Human) protein is Growth/differentiation factor 5 (GDF5).